The primary structure comprises 498 residues: SLLFLAAVGSCADDRNPLEECFRETDYEEFLEIAKNGLSTTSNPKRVVIVGAGMSGLSAAYVLANAGHQVTVLEASERAGGRVKTYRNEKEGWYANLGPMRLPEKHRIVREYIKKFDLRLNEFSQENENAWYFLQNIKKRVREVNKDPGVLEYPVKPSEVGKSAGQLYEESLRKAVEELRRTNCSYMLNKYDTYSTKEYLLKEGNLSPGAVDMIGDLLNEDSGYYVSFIESLKHDDIFAYEKRFDEIVGGMDKLPTSMYQAIQEKVHLNARVIEIQQDVKEVTVTYQTSQKETLSVTADYVIVCTTSRAARRITFEPPLPPKKAHALLSVHYRSGTKIFLTCTKKFWEDDGIHGGKSTTDLPSRFIYYPNHNFPNGVGVIIAYGIGDDANYFQALDFEDCGDIVINDLSLIHQLPKEEIQAICRPSMIQRWSLDNYAMGGITTFTPYHFQHFSEALTAPVDRIYFAGEYTAQAHGWIDSTIKSGLRAATDVNRASENK.

The signal sequence occupies residues Ser-1–Cys-11. An intrachain disulfide couples Cys-21 to Cys-184. Residues Met-54–Ser-55, Glu-74–Ala-75, Glu-74–Arg-78, Arg-82, and Gly-98–Arg-101 each bind FAD. Arg-101 lines the substrate pocket. An N-linked (GlcNAc...) asparagine glycan is attached at Asn-183. His-234 lines the substrate pocket. Val-272 is a binding site for FAD. An intrachain disulfide couples Cys-342 to Cys-423. Tyr-383 contacts substrate. Residues Glu-468, Gly-475–Thr-480, and Trp-476–Thr-480 contribute to the FAD site. Substrate is bound at residue Gly-475 to Trp-476.

Belongs to the flavin monoamine oxidase family. FIG1 subfamily. In terms of assembly, homodimer; non-covalently linked. It depends on FAD as a cofactor. In terms of processing, N-glycosylated. Contains 18.73% carbohydrates. As to expression, expressed by the venom gland.

The protein resides in the secreted. It catalyses the reaction an L-alpha-amino acid + O2 + H2O = a 2-oxocarboxylate + H2O2 + NH4(+). It carries out the reaction L-leucine + O2 + H2O = 4-methyl-2-oxopentanoate + H2O2 + NH4(+). Its activity is regulated as follows. Strongly inhibited by glutathione, and moderately inhibited by PMSF, acetate iodine and glutamic acid. Is also inhibited by Zn(2+) ions, but not by Ca(2+), Mg(2+) and Mn(2+). In terms of biological role, catalyzes an oxidative deamination of predominantly hydrophobic and aromatic L-amino acids, thus producing hydrogen peroxide that may contribute to the diverse toxic effects of this enzyme. This enzyme shows activity on L-Leu. This enzyme inhibits platelet aggregation in human platelet rich plasma induced by ADP (IC(50)=3.2 mg/mL), and shows antibacterial activities on both Gram-positive and Gram-negative bacteria (P.aeruginosa, V.cholerae, S.aureus, E.faecalis and E.coli). These two effects are due to hydrogen peroxide, since they are inhibited by catalase. It also induces edema in mouse paw pads but does not show hemolytic activity. This protein may also have activities in hemorrhage, and apoptosis. The chain is L-amino acid oxidase from Bothrops pictus (Desert lancehead).